The chain runs to 253 residues: Probable transcriptional regulatory protein Tery_2125 (253 aa).

The protein belongs to the TACO1 family.

The protein resides in the cytoplasm. The protein is Probable transcriptional regulatory protein Tery_2125 of Trichodesmium erythraeum (strain IMS101).